Here is a 271-residue protein sequence, read N- to C-terminus: ELH (271 aa).

The N-terminal stretch at 1–28 (MKRPNNRPTNTMSLILCLTLSSLCVSSQ) is a signal peptide. 2 propeptides span residues 29 to 95 (SASV…NEKR) and 162 to 184 (AAGG…RRKR). The tract at residues 162–190 (AAGGMEQSEGQNPETESHSRRKRSVLTPS) is disordered. Lys241 carries the lysine amide modification.

This sequence belongs to the molluscan ELH family. Bag cell neurons.

It is found in the secreted. In terms of biological role, ELH acts as a neurotransmitter locally, upon neurons of the abdominal ganglion and as a hormone by diffusing into the circulating hemolymph and modulating the activity of other organs. It specifically causes contraction of smooth muscle in the ovotestis and expulsion of the egg string. Functionally, alpha-BCP decreases the activity of a cluster of neurons in the left upper quadrant of the abdominal ganglion. Beta-BCP specifically excites 2 neurons, L1 and R1, in the abdominal ganglion. This Aplysia californica (California sea hare) protein is ELH.